A 371-amino-acid polypeptide reads, in one-letter code: tRNA-specific 2-thiouridylase MnmA (371 aa).

Residues 13-20 (GMSGGVDS) and methionine 39 each bind ATP. The tract at residues 99–101 (NPD) is interaction with target base in tRNA. Cysteine 104 functions as the Nucleophile in the catalytic mechanism. The cysteines at positions 104 and 200 are disulfide-linked. Residue glycine 128 coordinates ATP. Residues 150-152 (KDQ) are interaction with tRNA. The Cysteine persulfide intermediate role is filled by cysteine 200. The interval 309 to 310 (RY) is interaction with tRNA.

This sequence belongs to the MnmA/TRMU family.

The protein localises to the cytoplasm. It carries out the reaction S-sulfanyl-L-cysteinyl-[protein] + uridine(34) in tRNA + AH2 + ATP = 2-thiouridine(34) in tRNA + L-cysteinyl-[protein] + A + AMP + diphosphate + H(+). Its function is as follows. Catalyzes the 2-thiolation of uridine at the wobble position (U34) of tRNA, leading to the formation of s(2)U34. This is tRNA-specific 2-thiouridylase MnmA from Bacillus velezensis (strain DSM 23117 / BGSC 10A6 / LMG 26770 / FZB42) (Bacillus amyloliquefaciens subsp. plantarum).